The primary structure comprises 393 residues: S-adenosylmethionine synthase 2 (393 aa).

Mg(2+) is bound at residue E9. ATP is bound at residue H15. E43 contributes to the K(+) binding site. The L-methionine site is built by E56 and Q99. Residues 167–169, 235–238, D246, 252–253, A269, K273, and K277 each bind ATP; these read DGK, SGRF, and RK. D246 is an L-methionine binding site. Residue K277 coordinates L-methionine.

This sequence belongs to the AdoMet synthase family. As to quaternary structure, homotetramer. Interacts with GRF3. Mn(2+) is required as a cofactor. It depends on Mg(2+) as a cofactor. The cofactor is Co(2+). Requires K(+) as cofactor. In terms of tissue distribution, highly expressed in stems and roots. Detected in trichomes (at the protein level).

The protein resides in the cytoplasm. The catalysed reaction is L-methionine + ATP + H2O = S-adenosyl-L-methionine + phosphate + diphosphate. Its pathway is amino-acid biosynthesis; S-adenosyl-L-methionine biosynthesis; S-adenosyl-L-methionine from L-methionine: step 1/1. Its activity is regulated as follows. Inhibited by 5,5'-dithiobis-2-nitrobenzoic acid (DTNB) and N-ethylmaleimide (NEM) (in vitro). In terms of biological role, catalyzes the formation of S-adenosylmethionine from methionine and ATP. The reaction comprises two steps that are both catalyzed by the same enzyme: formation of S-adenosylmethionine (AdoMet) and triphosphate, and subsequent hydrolysis of the triphosphate. The chain is S-adenosylmethionine synthase 2 (SAM2) from Arabidopsis thaliana (Mouse-ear cress).